The sequence spans 143 residues: Large ribosomal subunit protein uL15 (143 aa).

The segment covering 1 to 13 (MIRKKKKVKKIRG) has biased composition (basic residues). A disordered region spans residues 1–39 (MIRKKKKVKKIRGSRTCGGGSHKKRRGAGNKGGRGMAGG). Residues 29 to 38 (GNKGGRGMAG) show a composition bias toward gly residues.

This sequence belongs to the universal ribosomal protein uL15 family. In terms of assembly, part of the 50S ribosomal subunit.

Functionally, binds to the 23S rRNA. In Methanocaldococcus jannaschii (strain ATCC 43067 / DSM 2661 / JAL-1 / JCM 10045 / NBRC 100440) (Methanococcus jannaschii), this protein is Large ribosomal subunit protein uL15.